Here is a 104-residue protein sequence, read N- to C-terminus: L-rhamnose mutarotase (104 aa).

Tyr18 contacts substrate. Residue His22 is the Proton donor of the active site. Residues Tyr41 and Trp76–Trp77 each bind substrate.

The protein belongs to the rhamnose mutarotase family. Homodimer.

The protein resides in the cytoplasm. It carries out the reaction alpha-L-rhamnose = beta-L-rhamnose. The protein operates within carbohydrate metabolism; L-rhamnose metabolism. Functionally, involved in the anomeric conversion of L-rhamnose. In Salmonella newport (strain SL254), this protein is L-rhamnose mutarotase.